Here is a 217-residue protein sequence, read N- to C-terminus: Uracil-DNA glycosylase (217 aa).

D62 serves as the catalytic Proton acceptor.

It belongs to the uracil-DNA glycosylase (UDG) superfamily. UNG family.

Its subcellular location is the cytoplasm. It catalyses the reaction Hydrolyzes single-stranded DNA or mismatched double-stranded DNA and polynucleotides, releasing free uracil.. In terms of biological role, excises uracil residues from the DNA which can arise as a result of misincorporation of dUMP residues by DNA polymerase or due to deamination of cytosine. This Streptococcus uberis (strain ATCC BAA-854 / 0140J) protein is Uracil-DNA glycosylase.